A 310-amino-acid chain; its full sequence is L-lactate dehydrogenase (310 aa).

NAD(+) is bound by residues Val-11, Asp-32, Tyr-62, and 76-77 (GV). Substrate is bound by residues Gln-79, Arg-85, and 117 to 120 (NPVD). NAD(+) is bound by residues 115 to 117 (ATN) and Ser-140. 145–148 (DTAR) contributes to the substrate binding site. Arg-150 and His-165 together coordinate beta-D-fructose 1,6-bisphosphate. The active-site Proton acceptor is the His-172. Tyr-218 carries the phosphotyrosine modification. Residue Thr-227 coordinates substrate.

The protein belongs to the LDH/MDH superfamily. LDH family. Homotetramer.

The protein localises to the cytoplasm. The catalysed reaction is (S)-lactate + NAD(+) = pyruvate + NADH + H(+). It functions in the pathway fermentation; pyruvate fermentation to lactate; (S)-lactate from pyruvate: step 1/1. Allosterically activated by fructose 1,6-bisphosphate (FBP). Its function is as follows. Catalyzes the conversion of lactate to pyruvate. The polypeptide is L-lactate dehydrogenase (Thermus thermophilus (strain ATCC BAA-163 / DSM 7039 / HB27)).